We begin with the raw amino-acid sequence, 362 residues long: Atypical chemokine receptor 3 (362 aa).

Residues Met1–Lys40 lie on the Extracellular side of the membrane. Asn13, Asn22, and Asn39 each carry an N-linked (GlcNAc...) asparagine glycan. A helical transmembrane segment spans residues Ser41–Ala61. Over Asn62 to Cys81 the chain is Cytoplasmic. The chain crosses the membrane as a helical span at residues Tyr82–Val102. Over Ser103 to Lys118 the chain is Extracellular. Cysteines 117 and 196 form a disulfide. A helical membrane pass occupies residues Ile119–Ser139. The Cytoplasmic portion of the chain corresponds to Val140–Arg162. The chain crosses the membrane as a helical span at residues Ala163–Leu183. Residues Lys184–Glu213 are Extracellular-facing. The helical transmembrane segment at Leu214–Leu234 threads the bilayer. Residues Leu235–Lys252 are Cytoplasmic-facing. The chain crosses the membrane as a helical span at residues Ile253–Leu273. The Extracellular portion of the chain corresponds to Leu274–Ala296. Residues Leu297–Asn319 traverse the membrane as a helical segment. Topologically, residues Arg320–Lys362 are cytoplasmic. Residues Tyr324–Lys362 are C-terminal cytoplasmic tail. A phosphoserine mark is found at Ser347, Ser350, and Ser355.

Belongs to the G-protein coupled receptor 1 family. Atypical chemokine receptor subfamily. Homodimer. Can form heterodimers with CXCR4; heterodimerization may regulate CXCR4 signaling activity. Interacts with ARRB1 and ARRB2. Post-translationally, the Ser/Thr residues in the C-terminal cytoplasmic tail may be phosphorylated. Ubiquitinated at the Lys residues in its C-terminal cytoplasmic tail and is essential for correct trafficking from and to the cell membrane. Deubiquitinated by CXCL12-stimulation in a reversible manner.

It is found in the cell membrane. Its subcellular location is the early endosome. The protein resides in the recycling endosome. Functionally, atypical chemokine receptor that controls chemokine levels and localization via high-affinity chemokine binding that is uncoupled from classic ligand-driven signal transduction cascades, resulting instead in chemokine sequestration, degradation, or transcytosis. Also known as interceptor (internalizing receptor) or chemokine-scavenging receptor or chemokine decoy receptor. Acts as a receptor for chemokines CXCL11 and CXCL12/SDF1. Chemokine binding does not activate G-protein-mediated signal transduction but instead induces beta-arrestin recruitment, leading to ligand internalization and activation of MAPK signaling pathway. Required for regulation of CXCR4 protein levels in migrating interneurons, thereby adapting their chemokine responsiveness. In glioma cells, transduces signals via MEK/ERK pathway, mediating resistance to apoptosis. Promotes cell growth and survival. Not involved in cell migration, adhesion or proliferation of normal hematopoietic progenitors but activated by CXCL11 in malignant hemapoietic cells, leading to phosphorylation of ERK1/2 (MAPK3/MAPK1) and enhanced cell adhesion and migration. Plays a regulatory role in CXCR4-mediated activation of cell surface integrins by CXCL12. Required for heart valve development. Regulates axon guidance in the oculomotor system through the regulation of CXCL12 levels. In Canis lupus familiaris (Dog), this protein is Atypical chemokine receptor 3 (ACKR3).